We begin with the raw amino-acid sequence, 447 residues long: CBL-interacting serine/threonine-protein kinase 9 (447 aa).

A Protein kinase domain is found at 19–274; that stretch reads YEMGRTLGEG…IAELLEDEWF (256 aa). ATP-binding positions include 25–33 and K48; that span reads LGEGSFAKV. D142 serves as the catalytic Proton acceptor. The interval 160 to 189 is activation loop; that stretch reads DFGLSAFSRQVREDGLLHTACGTPNYVAPE. The residue at position 164 (S164) is a Phosphoserine. T178 carries the post-translational modification Phosphothreonine. Positions 312–336 constitute an NAF domain; it reads EKPVSMNAFELISSSSEFSLENLFE. The interval 343 to 372 is PPI; sequence KKETRFTSQRSASEIMSKMEETAKPLGFNV.

The protein belongs to the protein kinase superfamily. CAMK Ser/Thr protein kinase family. SNF1 subfamily. In terms of assembly, interacts with CBL2 and CBL3. The cofactor is Mn(2+). In terms of tissue distribution, expressed at low levels in roots and shoots. Detected in root vascular bundles and in the leaf vascular tissue and hydathode, but not in root tips.

Its subcellular location is the cytoplasm. The protein resides in the nucleus. It catalyses the reaction L-seryl-[protein] + ATP = O-phospho-L-seryl-[protein] + ADP + H(+). The catalysed reaction is L-threonyl-[protein] + ATP = O-phospho-L-threonyl-[protein] + ADP + H(+). In terms of biological role, CIPK serine-threonine protein kinases interact with CBL proteins. Binding of a CBL protein to the regulatory NAF domain of CIPK protein lead to the activation of the kinase in a calcium-dependent manner. Involved in K(+) homeostasis under low-K(+) stress. This chain is CBL-interacting serine/threonine-protein kinase 9 (CIPK9), found in Arabidopsis thaliana (Mouse-ear cress).